A 389-amino-acid chain; its full sequence is Transaldolase (389 aa).

The Schiff-base intermediate with substrate role is filled by Lys-136. EF-hand domains follow at residues 330–365 (ALNQ…FDAI) and 365–388 (IDLN…VSKL). The Ca(2+) site is built by Asp-343, Asp-345, Asp-347, Glu-354, Asp-366, Asn-368, Asp-370, Lys-372, and Glu-377.

This sequence belongs to the transaldolase family. Type 1 subfamily.

It is found in the cytoplasm. It carries out the reaction D-sedoheptulose 7-phosphate + D-glyceraldehyde 3-phosphate = D-erythrose 4-phosphate + beta-D-fructose 6-phosphate. It participates in carbohydrate degradation; pentose phosphate pathway; D-glyceraldehyde 3-phosphate and beta-D-fructose 6-phosphate from D-ribose 5-phosphate and D-xylulose 5-phosphate (non-oxidative stage): step 2/3. Its function is as follows. Transaldolase is important for the balance of metabolites in the pentose-phosphate pathway. This Gloeobacter violaceus (strain ATCC 29082 / PCC 7421) protein is Transaldolase.